The chain runs to 86 residues: Large ribosomal subunit protein bL27 (86 aa).

Residues 1–23 (MAHKKAGGSTRNGRDSESKRLGV) are disordered.

Belongs to the bacterial ribosomal protein bL27 family.

In Alkalilimnicola ehrlichii (strain ATCC BAA-1101 / DSM 17681 / MLHE-1), this protein is Large ribosomal subunit protein bL27.